Reading from the N-terminus, the 358-residue chain is MQSYNVAVLAGDGIGPEVMAEAMKVLNKVQEKFGFKLNFNEFFVGGAAIDHCGYPLPAETLKGCDEADAILFGSVGGPKWTNLPPDQQPERGALLPLRKHFKLFCNLRPATLYKGLEKFCPLRADIAAKGFDMVVVRELTGGIYFGQPKGREGEGSQTKAFDTEVYYKYEIERIARAAFEAAMKRNKKVTSVDKANVLQSSILWRETVTEMAKDYPEVTLEHIYIDNATMQLIKAPESFDVLLCSNIFGDIISDEAAMITGSMGMLPSASLNEAGFGLYEPAGGSAPDIAGKGIANPIAQILSAAMMLRYSFNLNEAADAIESAVQKVLASGHRTADLADDSTPVSTAEMGTLITQAI.

Residue 77 to 90 (GPKWTNLPPDQQPE) coordinates NAD(+). Residues Arg98, Arg108, Arg137, and Asp226 each contribute to the substrate site. Mg(2+)-binding residues include Asp226, Asp250, and Asp254. 284-296 (GSAPDIAGKGIAN) is a binding site for NAD(+).

The protein belongs to the isocitrate and isopropylmalate dehydrogenases family. LeuB type 1 subfamily. Homodimer. The cofactor is Mg(2+). It depends on Mn(2+) as a cofactor.

The protein localises to the cytoplasm. The catalysed reaction is (2R,3S)-3-isopropylmalate + NAD(+) = 4-methyl-2-oxopentanoate + CO2 + NADH. Its pathway is amino-acid biosynthesis; L-leucine biosynthesis; L-leucine from 3-methyl-2-oxobutanoate: step 3/4. Its function is as follows. Catalyzes the oxidation of 3-carboxy-2-hydroxy-4-methylpentanoate (3-isopropylmalate) to 3-carboxy-4-methyl-2-oxopentanoate. The product decarboxylates to 4-methyl-2 oxopentanoate. This chain is 3-isopropylmalate dehydrogenase, found in Haemophilus influenzae (strain 86-028NP).